We begin with the raw amino-acid sequence, 279 residues long: Alcohol dehydrogenase-related 31 kDa protein (279 aa).

Position 11–34 (11–34 (YVADCGGIALETSKVLMTKNIAKL)) interacts with NAD(+). Ser-139 contacts substrate. Residue Tyr-152 is the Proton acceptor of the active site.

The protein belongs to the short-chain dehydrogenases/reductases (SDR) family.

This is Alcohol dehydrogenase-related 31 kDa protein (Adhr) from Drosophila madeirensis (Fruit fly).